A 165-amino-acid polypeptide reads, in one-letter code: Cytochrome c-550-like protein (165 aa).

A signal peptide spans 1–30 (MLNKSLLIRFVLTILIIVQVIIFDTQPVQA). Positions 75, 78, 79, and 129 each coordinate heme c.

It belongs to the cytochrome c family. PsbV subfamily. The cofactor is heme c.

It localises to the cellular thylakoid membrane. Its function is as follows. Possible low-potential cytochrome c. The chain is Cytochrome c-550-like protein (psbV2) from Trichodesmium erythraeum (strain IMS101).